The sequence spans 242 residues: MGRGPSIEGRKNASDAKRGKMFTKIIREISVAARAGGGDPSNNPRLRTAMDKGLSANMSKDVIERAIKKSTGELEGVEYEEVRYEGYAPGGVAVIVDCLTDNRVRTVADVRHAFSKCGGNMGTEGSVAFMFKRLGVLSFAAGIDEDTLTDAAIDAGADDVVVYPEDGAIDVLTAPDAFAQVRDALAAAGLEPAHAEIAFRADNDIVVDGDTAVQVRKLLDMLEDLDDVQDVYSNVDQAALGA.

The protein belongs to the TACO1 family.

The protein localises to the cytoplasm. The chain is Probable transcriptional regulatory protein PXO_01555 from Xanthomonas oryzae pv. oryzae (strain PXO99A).